Reading from the N-terminus, the 153-residue chain is Aspartate carbamoyltransferase regulatory chain (153 aa).

Zn(2+) is bound by residues Cys109, Cys114, Cys138, and Cys141.

The protein belongs to the PyrI family. Contains catalytic and regulatory chains. It depends on Zn(2+) as a cofactor.

Its function is as follows. Involved in allosteric regulation of aspartate carbamoyltransferase. This is Aspartate carbamoyltransferase regulatory chain from Shigella dysenteriae serotype 1 (strain Sd197).